The primary structure comprises 600 residues: Elongation factor 4 (600 aa).

The tr-type G domain occupies 5-187 (KYIRNFSIIA…AIVNKLPPPK (183 aa)). GTP contacts are provided by residues 17 to 22 (DHGKST) and 134 to 137 (NKID).

Belongs to the TRAFAC class translation factor GTPase superfamily. Classic translation factor GTPase family. LepA subfamily.

It is found in the cell inner membrane. The enzyme catalyses GTP + H2O = GDP + phosphate + H(+). In terms of biological role, required for accurate and efficient protein synthesis under certain stress conditions. May act as a fidelity factor of the translation reaction, by catalyzing a one-codon backward translocation of tRNAs on improperly translocated ribosomes. Back-translocation proceeds from a post-translocation (POST) complex to a pre-translocation (PRE) complex, thus giving elongation factor G a second chance to translocate the tRNAs correctly. Binds to ribosomes in a GTP-dependent manner. The sequence is that of Elongation factor 4 from Rickettsia felis (strain ATCC VR-1525 / URRWXCal2) (Rickettsia azadi).